Here is a 630-residue protein sequence, read N- to C-terminus: MTQTYNADAIEVLTGLEPVRRRPGMYTDTTRPNHLGQEVIDNSVDEALAGHAKRVDVILHADQSLEVIDDGRGMPVDIHPEEGVPAVELILCRLHAGGKFSNKNYQFSGGLHGVGISVVNALSKRVEVTVRRDGQVYNIAFENGEKVQDLQVVGTCGKRNTGTSVHFWPDESFFDSPRFSVSRLMHVLKAKAVLCPGVEITFKDEVNNSEQRWCYQDGLNDYLGEAVNGLPTLPEKPFIGNFNGETEAVDWALLWLPEGGELLTESYVNLIPTMQGGTHVNGLRQGLLDAMREFCEYRNILPRGVKLSAEDIWDRCAYVLSVKMQDPQFAGQTKERLSSRQCAAFVSGVVKDAFSLWLNQNVQAAEQLAEMAIASAQRRLRAAKKVVRKKLTSGPALPGKLADCTAQDLNRTELFLVEGDSAGGSAKQARDREYQAIMPLKGKILNTWEVSSDEVLASQEVHDISVAIGIDPDSDDLSQLRYGKICILADADSDGLHIATLLCALFVRHFRALVKNGHVYVALPPLYRIDLGKEVYYALTEEEKAGVLEQLKRKKGKPNVQRFKGLGEMNPMQLRETTLDPNTRRLVQLTISDEDDQRTNAMMDMLLAKKRSEDRRNWLQEKGDLADLDV.

Residues tyrosine 5, asparagine 42, aspartate 69, 110-116, and lysine 334 each bind ATP; that span reads GLHGVGI. In terms of domain architecture, Toprim spans 412–525; sequence TELFLVEGDS…NGHVYVALPP (114 aa). Residues glutamate 418, aspartate 490, and aspartate 492 each contribute to the Mg(2+) site.

Belongs to the type II topoisomerase family. ParE type 1 subfamily. Heterotetramer composed of ParC and ParE. The cofactor is Mg(2+). Mn(2+) serves as cofactor. Requires Ca(2+) as cofactor.

The enzyme catalyses ATP-dependent breakage, passage and rejoining of double-stranded DNA.. Functionally, topoisomerase IV is essential for chromosome segregation. It relaxes supercoiled DNA. Performs the decatenation events required during the replication of a circular DNA molecule. The chain is DNA topoisomerase 4 subunit B from Salmonella typhi.